The chain runs to 201 residues: Membrane protein UL120 (201 aa).

The N-terminal stretch at 1-25 (MYRAGVTLLVVAVVSFGRWDSVTVA) is a signal peptide. Residues 26–170 (TTIRVGWWYE…AYFRRSDHRA (145 aa)) lie on the Extracellular side of the membrane. N-linked (GlcNAc...) asparagine; by host glycosylation is found at Asn-47, Asn-50, Asn-56, Asn-85, Asn-96, Asn-114, Asn-123, and Asn-138. Residues 171 to 191 (FMIVILTQVVFVVFIINASFI) form a helical membrane-spanning segment. Over 192–201 (WSWTFRRHKR) the chain is Cytoplasmic.

It belongs to the HHV-5 UL120 protein family.

Its subcellular location is the host membrane. This is Membrane protein UL120 (UL120) from Human cytomegalovirus (strain Merlin) (HHV-5).